Here is a 139-residue protein sequence, read N- to C-terminus: Ribosome-binding factor A (139 aa).

Belongs to the RbfA family. In terms of assembly, monomer. Binds 30S ribosomal subunits, but not 50S ribosomal subunits or 70S ribosomes.

Its subcellular location is the cytoplasm. One of several proteins that assist in the late maturation steps of the functional core of the 30S ribosomal subunit. Associates with free 30S ribosomal subunits (but not with 30S subunits that are part of 70S ribosomes or polysomes). Required for efficient processing of 16S rRNA. May interact with the 5'-terminal helix region of 16S rRNA. The chain is Ribosome-binding factor A from Methylobacterium sp. (strain 4-46).